The sequence spans 102 residues: Small ribosomal subunit protein uS10 (102 aa).

A disordered region spans residues 34–59 (QMSGPIPLPTKRLLVPTRKSPDGEGK).

The protein belongs to the universal ribosomal protein uS10 family. Part of the 30S ribosomal subunit.

Its function is as follows. Involved in the binding of tRNA to the ribosomes. This Methanopyrus kandleri (strain AV19 / DSM 6324 / JCM 9639 / NBRC 100938) protein is Small ribosomal subunit protein uS10.